The following is a 427-amino-acid chain: 3-phosphoshikimate 1-carboxyvinyltransferase (427 aa).

The 3-phosphoshikimate site is built by Lys-21, Ser-22, and Arg-26. Lys-21 contacts phosphoenolpyruvate. Residues Gly-93 and Arg-121 each contribute to the phosphoenolpyruvate site. The 3-phosphoshikimate site is built by Ser-166, Gln-168, Asp-314, and Lys-341. Phosphoenolpyruvate is bound at residue Gln-168. The active-site Proton acceptor is the Asp-314. Residues Arg-345 and Arg-387 each contribute to the phosphoenolpyruvate site.

Belongs to the EPSP synthase family. As to quaternary structure, monomer.

The protein resides in the cytoplasm. It catalyses the reaction 3-phosphoshikimate + phosphoenolpyruvate = 5-O-(1-carboxyvinyl)-3-phosphoshikimate + phosphate. It functions in the pathway metabolic intermediate biosynthesis; chorismate biosynthesis; chorismate from D-erythrose 4-phosphate and phosphoenolpyruvate: step 6/7. Its function is as follows. Catalyzes the transfer of the enolpyruvyl moiety of phosphoenolpyruvate (PEP) to the 5-hydroxyl of shikimate-3-phosphate (S3P) to produce enolpyruvyl shikimate-3-phosphate and inorganic phosphate. The polypeptide is 3-phosphoshikimate 1-carboxyvinyltransferase (Alkaliphilus oremlandii (strain OhILAs) (Clostridium oremlandii (strain OhILAs))).